A 120-amino-acid polypeptide reads, in one-letter code: Large ribosomal subunit protein uL14 (120 aa).

It belongs to the universal ribosomal protein uL14 family. As to quaternary structure, part of the 50S ribosomal subunit. Forms a cluster with proteins L3 and L19. In the 70S ribosome, L14 and L19 interact and together make contacts with the 16S rRNA in bridges B5 and B8.

Functionally, binds to 23S rRNA. Forms part of two intersubunit bridges in the 70S ribosome. The chain is Large ribosomal subunit protein uL14 from Aster yellows witches'-broom phytoplasma (strain AYWB).